Consider the following 426-residue polypeptide: Phosphomethylpyrimidine synthase (426 aa).

Residues N65, M94, Y123, H162, 184-186 (SRG), 225-228 (DGLR), and E264 each bind substrate. Residue H268 coordinates Zn(2+). Residue Y291 coordinates substrate. Zn(2+) is bound at residue H332. 3 residues coordinate [4Fe-4S] cluster: C409, C412, and C416.

This sequence belongs to the ThiC family. It depends on [4Fe-4S] cluster as a cofactor.

It catalyses the reaction 5-amino-1-(5-phospho-beta-D-ribosyl)imidazole + S-adenosyl-L-methionine = 4-amino-2-methyl-5-(phosphooxymethyl)pyrimidine + CO + 5'-deoxyadenosine + formate + L-methionine + 3 H(+). It functions in the pathway cofactor biosynthesis; thiamine diphosphate biosynthesis. In terms of biological role, catalyzes the synthesis of the hydroxymethylpyrimidine phosphate (HMP-P) moiety of thiamine from aminoimidazole ribotide (AIR) in a radical S-adenosyl-L-methionine (SAM)-dependent reaction. In Thermodesulfovibrio yellowstonii (strain ATCC 51303 / DSM 11347 / YP87), this protein is Phosphomethylpyrimidine synthase.